A 161-amino-acid polypeptide reads, in one-letter code: MFLMVTGFMNYSQQTVRAARYIGQSFMITLSHANRLPVTIQYPYEKLITSERFRGRIHFEFDKCIACEVCVRVCPIDLPVVDWKLETNIRKKRLLNYSIDFGICIFCGNCIEYCPTNCLSMTEEYELSAYDRHELNYNQIALGRLPMSVIDDYTIRTIQIK.

2 consecutive 4Fe-4S ferredoxin-type domains span residues 55–84 (GRIHFEFDKCIACEVCVRVCPIDLPVVDWK) and 95–124 (LNYSIDFGICIFCGNCIEYCPTNCLSMTEE). Positions 64, 67, 70, 74, 104, 107, 110, and 114 each coordinate [4Fe-4S] cluster.

It belongs to the complex I 23 kDa subunit family. NDH is composed of at least 16 different subunits, 5 of which are encoded in the nucleus. The cofactor is [4Fe-4S] cluster.

Its subcellular location is the plastid. The protein localises to the chloroplast thylakoid membrane. The catalysed reaction is a plastoquinone + NADH + (n+1) H(+)(in) = a plastoquinol + NAD(+) + n H(+)(out). The enzyme catalyses a plastoquinone + NADPH + (n+1) H(+)(in) = a plastoquinol + NADP(+) + n H(+)(out). Its function is as follows. NDH shuttles electrons from NAD(P)H:plastoquinone, via FMN and iron-sulfur (Fe-S) centers, to quinones in the photosynthetic chain and possibly in a chloroplast respiratory chain. The immediate electron acceptor for the enzyme in this species is believed to be plastoquinone. Couples the redox reaction to proton translocation, and thus conserves the redox energy in a proton gradient. The chain is NAD(P)H-quinone oxidoreductase subunit I, chloroplastic from Lotus japonicus (Lotus corniculatus var. japonicus).